Here is a 655-residue protein sequence, read N- to C-terminus: Putative esterase (655 aa).

A helical membrane pass occupies residues 9–29 (VLSLTLIYISISIGFSVYFYV). 7 N-linked (GlcNAc...) asparagine; by host glycosylation sites follow: asparagine 71, asparagine 89, asparagine 101, asparagine 185, asparagine 386, asparagine 449, and asparagine 512. Catalysis depends on histidine 515, which acts as the Charge relay system. N-linked (GlcNAc...) asparagine; by host glycans are attached at residues asparagine 527 and asparagine 597.

Belongs to the type-B carboxylesterase/lipase family.

It localises to the membrane. The enzyme catalyses a carboxylic ester + H2O = an alcohol + a carboxylate + H(+). This Noctuidae (owlet moths) protein is Putative esterase.